Here is a 103-residue protein sequence, read N- to C-terminus: Small ribosomal subunit protein uS10 (103 aa).

Belongs to the universal ribosomal protein uS10 family. As to quaternary structure, part of the 30S ribosomal subunit.

In terms of biological role, involved in the binding of tRNA to the ribosomes. The sequence is that of Small ribosomal subunit protein uS10 from Chlorobaculum parvum (strain DSM 263 / NCIMB 8327) (Chlorobium vibrioforme subsp. thiosulfatophilum).